We begin with the raw amino-acid sequence, 31 residues long: Photosystem II reaction center protein T (31 aa).

The helical transmembrane segment at 3 to 23 threads the bilayer; sequence SFAYVLILTLAIATLFFAIAF.

The protein belongs to the PsbT family. As to quaternary structure, PSII is composed of 1 copy each of membrane proteins PsbA, PsbB, PsbC, PsbD, PsbE, PsbF, PsbH, PsbI, PsbJ, PsbK, PsbL, PsbM, PsbT, PsbX, PsbY, PsbZ, Psb30/Ycf12, peripheral proteins PsbO, CyanoQ (PsbQ), PsbU, PsbV and a large number of cofactors. It forms dimeric complexes.

The protein localises to the cellular thylakoid membrane. Found at the monomer-monomer interface of the photosystem II (PS II) dimer, plays a role in assembly and dimerization of PSII. PSII is a light-driven water plastoquinone oxidoreductase, using light energy to abstract electrons from H(2)O, generating a proton gradient subsequently used for ATP formation. The sequence is that of Photosystem II reaction center protein T from Parasynechococcus marenigrum (strain WH8102).